We begin with the raw amino-acid sequence, 226 residues long: MLANGAIVFLAAALGVSGHYTWPRVNDGADWQQVRKADNWQDNGYVGDVTSPQIRCFQATPSPAPSVLNTTAGSTVTYWANPDVYHPGPVQFYMARVPDGEDINSWNGDGAVWFKVYEDHPTFGAQLTWPSTGKSSFAVPIPPCIKSGYYLLRAEQIGLHVAQSVGGAQFYISCAQLSVTGGGSTEPPNKVAFPGAYSATDPGILINIYYPVPTSYQNPGPAVFSC.

The first 18 residues, 1–18 (MLANGAIVFLAAALGVSG), serve as a signal peptide directing secretion. Cu(2+) is bound at residue His-19. Cystine bridges form between Cys-56/Cys-174 and Cys-144/Cys-226. N-linked (GlcNAc...) asparagine glycosylation is present at Asn-69. A Cu(2+)-binding site is contributed by His-86. The O2 site is built by His-160 and Gln-169. A Cu(2+)-binding site is contributed by Tyr-171.

This sequence belongs to the polysaccharide monooxygenase AA9 family. The cofactor is Cu(2+).

Its subcellular location is the secreted. It carries out the reaction [(1-&gt;4)-beta-D-glucosyl]n+m + reduced acceptor + O2 = 4-dehydro-beta-D-glucosyl-[(1-&gt;4)-beta-D-glucosyl]n-1 + [(1-&gt;4)-beta-D-glucosyl]m + acceptor + H2O.. Its function is as follows. Lytic polysaccharide monooxygenase (LPMO) that depolymerizes crystalline and amorphous polysaccharides via the oxidation of scissile alpha- or beta-(1-4)-glycosidic bonds, yielding C1 and C4 oxidation products. Catalysis by LPMOs requires the reduction of the active-site copper from Cu(II) to Cu(I) by a reducing agent and H(2)O(2) or O(2) as a cosubstrate. Shows endoglucanase activity on tamarind xyloglucan, as well as on beechwood xylan when combined with phosphoric acid swollen cellulose (PASC). Shows no activity on wheat arabinoxylan, konjac glucomannan, acetylated spruce galactoglucomannan, or cellopentaose. The protein is AA9 family lytic polysaccharide monooxygenase E of Thermothielavioides terrestris (strain ATCC 38088 / NRRL 8126) (Thielavia terrestris).